Here is a 325-residue protein sequence, read N- to C-terminus: Melanocortin receptor 5 (325 aa).

Residues 1 to 37 lie on the Extracellular side of the membrane; sequence MNSSFHLHFLDLNLNATEGNLSGPNVKNKSSPCEDMG. Asn-2, Asn-15, Asn-20, and Asn-28 each carry an N-linked (GlcNAc...) asparagine glycan. Residues 38-61 traverse the membrane as a helical segment; it reads IAVEVFLTLGVISLLENILVIGAI. Over 62–73 the chain is Cytoplasmic; that stretch reads VKNKNLHSPMYF. The chain crosses the membrane as a helical span at residues 74–97; the sequence is FVCSLAVADMLVSMSSAWETITIY. Topologically, residues 98-114 are extracellular; it reads LLNNKHLVIADAFVRHI. Residues 115 to 138 form a helical membrane-spanning segment; that stretch reads DNVFDSMICISVVASMCSLLAIAV. The Cytoplasmic portion of the chain corresponds to 139-155; that stretch reads DRYVTIFYALRYHHIMT. A helical transmembrane segment spans residues 156–179; the sequence is ARRSGAIIAGIWAFCTGCGIVFIL. Residues 180–186 lie on the Extracellular side of the membrane; that stretch reads YSESTYV. The chain crosses the membrane as a helical span at residues 187–211; it reads ILCLISMFFAMLFLLVSLYIHMFLL. The Cytoplasmic portion of the chain corresponds to 212–239; sequence ARTHVKRIAALPRASSARQRTSMQGAVT. Residues 240–265 traverse the membrane as a helical segment; sequence VTMLLGVFTVCWAPFFLHLTLMLSCP. At 266-273 the chain is on the extracellular side; sequence QNLYCSCF. A helical transmembrane segment spans residues 274–297; that stretch reads MSHFNMYLILIMCNSVMDPLIYAF. The Cytoplasmic portion of the chain corresponds to 298–325; that stretch reads RSQEMRKTFKEIICCRGFRIACSFPRRD. S-palmitoyl cysteine attachment occurs at residues Cys-311 and Cys-312.

Belongs to the G-protein coupled receptor 1 family.

The protein localises to the cell membrane. In terms of biological role, receptor for MSH (alpha, beta and gamma) and ACTH. The activity of this receptor is mediated by G proteins which activate adenylate cyclase. This receptor is a possible mediator of the immunomodulation properties of melanocortins. The protein is Melanocortin receptor 5 (MC5R) of Pan troglodytes (Chimpanzee).